A 154-amino-acid chain; its full sequence is Nuclear cap-binding protein subunit 2-A (154 aa).

Residues Tyr-10, Tyr-33, Arg-102 to Asp-106, Arg-113 to Arg-117, and Gln-123 to Val-124 each bind mRNA. The RRM domain maps to Ser-30 to Gly-108.

It belongs to the RRM NCBP2 family. As to quaternary structure, component of the nuclear cap-binding complex (CBC), a heterodimer composed of Cbp80 and Cbp20 that interacts with m7GpppG-capped RNA. Interacts with Ars2.

Its subcellular location is the nucleus. In terms of biological role, component of the cap-binding complex (CBC), which binds co-transcriptionally to the 5' cap of pre-mRNAs and is involved in various processes such as pre-mRNA splicing and RNA-mediated gene silencing (RNAi). The CBC complex is involved in miRNA-mediated RNA interference via its interaction with Ars2 and is required for primary microRNAs (miRNAs) processing. Also involved in innate immunity via the short interfering RNAs (siRNAs) processing machinery by restricting the viral RNA production. In the CBC complex, Cbp20 recognizes and binds capped RNAs (m7GpppG-capped RNA) but requires Cbp80 to stabilize the movement of its N-terminal loop and lock the CBC into a high affinity cap-binding state with the cap structure. This chain is Nuclear cap-binding protein subunit 2-A (Cbp20-A), found in Drosophila virilis (Fruit fly).